A 904-amino-acid chain; its full sequence is MSQQTTIRKLAELVNTPVDKLLVQLAEAGMKFSGPDQVVTSTEKMKLLGFLRRTHGKAETSAEAASEAAKKITLNRRKLQEVTVNAGRTKTTVNVEVRQKRTYVKSENEGSGRAAPMTPDEERADILRKLEESRQRNLEEQQRLAESDRVRDEAIQRKREEEQAAKDRAEAERKAAEEAAAAASAPAPVADAPTPSAAAPAARSPSSPSSAPRAARPAGASPASRPAAPARADDRSNAAKHKTRGSHVMVAGVEDDDATKRFAGQLHLSAADRARRSNVRGKPTGRPGSSSSRRGNDNGRGGSQANSGPHGFERPTAPVVREVAIGETITVADLAQKLALKGGDVVKALFKMGVMATITQSIDHDTAALVTEELGHKAVRADNADFEDALLAHAEDAQGEATSRPPVVTIMGHVDHGKTSLLDYIRRTKIASGEAGGITQHIGAYHVETGRGVISFLDTPGHAAFTSMRARGAKITDIVVLVVAADDGVMPQTKEAVAHAKAAGVPLIVAVNKIDKTGADPLRVKNELLAENVVAEEFGGDTQFIEVSAKVGTGVDTLLDAISLQAEVLELKAVAEGRASGTVIESSLDKGRGPVATVLVQQGALKRGDYLVCGIQYGRVRALFDETGHQPASAGPSIPVQVLGLSGVPEAGDDFVVVDDERLAKDVAQQRETKRRESRLVASATNRMEDILAQMGKGEGQQVLNLVIKADVQGSVEALKQSLVALSNEDIRINVIHSGVGGITESDANSAAASKATIIGFNVRADASARKIVESNGIDLRYFSIIYDVIDQVKQVASGLLGVEIREEIIGIAQVRDVFRSSKFGAVAGCMVIEGVVKRSKPIRVLRDSVVVFEGELESLRRFKENVDEVRNGTECGIGVKAYNDVKAGDQIECFERIEVARTL.

Disordered regions lie at residues 103–122, 137–252, and 267–315; these read YVKSENEGSGRAAPMTPDEE, NLEE…MVAG, and HLSA…FERP. Positions 137 to 177 are enriched in basic and acidic residues; it reads NLEEQQRLAESDRVRDEAIQRKREEEQAAKDRAEAERKAAE. 2 stretches are compositionally biased toward low complexity: residues 178–230 and 280–293; these read EAAA…AAPA and RGKPTGRPGSSSSR. A tr-type G domain is found at 403 to 572; it reads SRPPVVTIMG…SLQAEVLELK (170 aa). Residues 412 to 419 are G1; the sequence is GHVDHGKT. A GTP-binding site is contributed by 412-419; sequence GHVDHGKT. The interval 437–441 is G2; the sequence is GITQH. Positions 458–461 are G3; sequence DTPG. Residues 458–462 and 512–515 contribute to the GTP site; these read DTPGH and NKID. A G4 region spans residues 512 to 515; sequence NKID. The interval 548-550 is G5; it reads SAK.

The protein belongs to the TRAFAC class translation factor GTPase superfamily. Classic translation factor GTPase family. IF-2 subfamily.

The protein localises to the cytoplasm. In terms of biological role, one of the essential components for the initiation of protein synthesis. Protects formylmethionyl-tRNA from spontaneous hydrolysis and promotes its binding to the 30S ribosomal subunits. Also involved in the hydrolysis of GTP during the formation of the 70S ribosomal complex. This is Translation initiation factor IF-2 from Xanthomonas euvesicatoria pv. vesicatoria (strain 85-10) (Xanthomonas campestris pv. vesicatoria).